The following is a 430-amino-acid chain: MSAIVDVYAREVLDSRGNPTVEVEVYTEDGGFGRALVPSGASTGEYEAVELRDGDKSRYLGKGVLKAVENVNEIIAPAIIGFEVTDQVGIDKTLIELDGTENKSKLGANAILGVSLAVARAAADELDMPLYQYLGGFNAKTLPVPMMNILNGGAHADNNVDIQEFMIMPVGAKSFREALRMGAEIFHSLKAVLKEKGYNTAVGDEGGFAPNLKSNEEALQTIIEAIEKAGYKPGEEVMLAMDVASSELYNKEDGKYHLEGEGVVKTSEEMVAWYEELVSKYPIISIEDGLDENDWEGHKLLTERLGKKVQLVGDDLFVTNTKKLAEGIEKGVGNSILIKVNQIGTLTETFDAIEMAKRAGYTAVVSHRSGETEDSTIADIAVATNAGQIKTGAPSRTDRVAKYNQLLRIEDQLGDTAIYNGIKSFYNLKK.

Gln163 serves as a coordination point for (2R)-2-phosphoglycerate. Glu205 acts as the Proton donor in catalysis. Asp242, Glu287, and Asp314 together coordinate Mg(2+). Positions 339, 368, 369, and 390 each coordinate (2R)-2-phosphoglycerate. Residue Lys339 is the Proton acceptor of the active site.

The protein belongs to the enolase family. It depends on Mg(2+) as a cofactor.

It localises to the cytoplasm. Its subcellular location is the secreted. The protein localises to the cell surface. It carries out the reaction (2R)-2-phosphoglycerate = phosphoenolpyruvate + H2O. Its pathway is carbohydrate degradation; glycolysis; pyruvate from D-glyceraldehyde 3-phosphate: step 4/5. Functionally, catalyzes the reversible conversion of 2-phosphoglycerate (2-PG) into phosphoenolpyruvate (PEP). It is essential for the degradation of carbohydrates via glycolysis. The chain is Enolase from Geobacillus sp. (strain WCH70).